Reading from the N-terminus, the 474-residue chain is PTS system N-acetylmuramic acid-specific EIIBC component (474 aa).

Residues 1-89 (MAKEISSELL…SELLGEAPVQ (89 aa)) enclose the PTS EIIB type-1 domain. Residues 1 to 123 (MAKEISSELL…LAKFATIFTP (123 aa)) are Cytoplasmic-facing. Cys-29 serves as the catalytic Phosphocysteine intermediate; for EIIB activity. Residues 115–474 (AKFATIFTPL…LFGCRNVNLD (360 aa)) form the PTS EIIC type-1 domain. The helical transmembrane segment at 124 to 144 (LIPGFIAAGLLLGIATLIATV) threads the bilayer. Topologically, residues 145 to 157 (MHVPADAQGTLPD) are periplasmic. Residues 158–178 (ALNFMKVFSKGLFTFLVILVG) traverse the membrane as a helical segment. Topologically, residues 179-180 (YN) are cytoplasmic. The helical transmembrane segment at 181 to 201 (AAQAFGGTGVNGAIIAALFLL) threads the bilayer. The Periplasmic segment spans residues 202–217 (GYNPAATTGYYAGFHD). A helical transmembrane segment spans residues 218 to 238 (FFGLPIDPRGNIIGVLIAAWA). Residues 239 to 260 (CARIEGMVRRFMPDDLDMLLTS) are Cytoplasmic-facing. Residues 261–281 (LITLLITATLAYLIIMPLGGW) traverse the membrane as a helical segment. The Periplasmic segment spans residues 282–301 (LFEGMSWLFMHLNSNPFGCA). The chain crosses the membrane as a helical span at residues 302 to 322 (VLAGLFLIAVVFGVHQGFIPV). The Cytoplasmic portion of the chain corresponds to 323–334 (YLALMDSQGFNS). Residues 335–355 (LFPILSMAGAGQVGAALALYW) form a helical membrane-spanning segment. At 356-368 (RAQPHSALRSQVR) the chain is on the periplasmic side. The chain crosses the membrane as a helical span at residues 369–389 (GAIIPGLLGVGEPLIYGVTLP). Residues 390-393 (RMKP) lie on the Cytoplasmic side of the membrane. A helical transmembrane segment spans residues 394–414 (FVTACLGGAAGGLFIGLIAWW). Residues 415-440 (GLPMGLNSAFGPSGLVALPLMTSAQG) lie on the Periplasmic side of the membrane. The helical transmembrane segment at 441–461 (ILPAMAVYAGGILVAWVCGFI) threads the bilayer. Topologically, residues 462-474 (FTTLFGCRNVNLD) are cytoplasmic.

It localises to the cell inner membrane. It catalyses the reaction N-acetyl-beta-D-muramate(out) + N(pros)-phospho-L-histidyl-[protein] = N-acetyl-beta-D-muramate 6-phosphate(in) + L-histidyl-[protein]. Functionally, the phosphoenolpyruvate-dependent sugar phosphotransferase system (sugar PTS), a major carbohydrate active transport system, catalyzes the phosphorylation of incoming sugar substrates concomitantly with their translocation across the cell membrane. This system is involved in N-acetylmuramic acid (MurNAc) transport, yielding cytoplasmic MurNAc-6-P. Is responsible for growth on MurNAc as the sole source of carbon and energy. Is also able to take up anhydro-N-acetylmuramic acid (anhMurNAc), but cannot phosphorylate the carbon 6, probably because of the 1,6-anhydro ring. The protein is PTS system N-acetylmuramic acid-specific EIIBC component (murP) of Escherichia coli (strain K12).